A 169-amino-acid polypeptide reads, in one-letter code: Cytochrome c oxidase subunit 4 isoform 1, mitochondrial (169 aa).

The N-terminal 22 residues, 1-22 (MLATRVFSLIGRRAISTSVCVR), are a transit peptide targeting the mitochondrion. At 23 to 98 (AHGSVVKSED…SFAEMNRSTN (76 aa)) the chain is on the mitochondrial matrix side. Lysine 29 is subject to N6-acetyllysine; alternate. Lysine 29 carries the N6-succinyllysine; alternate modification. Lysine 53 carries the post-translational modification N6-acetyllysine. Serine 56 and serine 58 each carry phosphoserine. Residue lysine 60 is modified to N6-acetyllysine; alternate. N6-succinyllysine; alternate is present on lysine 60. At lysine 67 the chain carries N6-acetyllysine. Residues 99–124 (EWKTVVGAAMFFIGFTALLLIWEKHY) form a helical membrane-spanning segment. The Mitochondrial intermembrane segment spans residues 125–169 (VYGPIPHTFEEEWVAKQTKRMLDMKVAPIQGFSAKWDYDKNEWKK).

This sequence belongs to the cytochrome c oxidase IV family. As to quaternary structure, component of the cytochrome c oxidase (complex IV, CIV), a multisubunit enzyme composed of 14 subunits. The complex is composed of a catalytic core of 3 subunits MT-CO1, MT-CO2 and MT-CO3, encoded in the mitochondrial DNA, and 11 supernumerary subunits COX4I1 (or COX4I2), COX5A, COX5B, COX6A2 (or COX6A1), COX6B1 (or COX6B2), COX6C, COX7A1 (or COX7A2), COX7B, COX7C, COX8B and NDUFA4, which are encoded in the nuclear genome. The complex exists as a monomer or a dimer and forms supercomplexes (SCs) in the inner mitochondrial membrane with NADH-ubiquinone oxidoreductase (complex I, CI) and ubiquinol-cytochrome c oxidoreductase (cytochrome b-c1 complex, complex III, CIII), resulting in different assemblies (supercomplex SCI(1)III(2)IV(1) and megacomplex MCI(2)III(2)IV(2)). Interacts with PHB2; the interaction decreases in absence of SPHK2. Interacts with AFG1L. Interacts with ABCB7; this interaction allows the regulation of cellular iron homeostasis and cellular reactive oxygen species (ROS) levels in cardiomyocytes. Interacts with FLVCR2; this interaction occurs in the absence of heme and is disrupted upon heme binding. Interacts with IRGC.

Its subcellular location is the mitochondrion inner membrane. It functions in the pathway energy metabolism; oxidative phosphorylation. In terms of biological role, component of the cytochrome c oxidase, the last enzyme in the mitochondrial electron transport chain which drives oxidative phosphorylation. The respiratory chain contains 3 multisubunit complexes succinate dehydrogenase (complex II, CII), ubiquinol-cytochrome c oxidoreductase (cytochrome b-c1 complex, complex III, CIII) and cytochrome c oxidase (complex IV, CIV), that cooperate to transfer electrons derived from NADH and succinate to molecular oxygen, creating an electrochemical gradient over the inner membrane that drives transmembrane transport and the ATP synthase. Cytochrome c oxidase is the component of the respiratory chain that catalyzes the reduction of oxygen to water. Electrons originating from reduced cytochrome c in the intermembrane space (IMS) are transferred via the dinuclear copper A center (CU(A)) of subunit 2 and heme A of subunit 1 to the active site in subunit 1, a binuclear center (BNC) formed by heme A3 and copper B (CU(B)). The BNC reduces molecular oxygen to 2 water molecules using 4 electrons from cytochrome c in the IMS and 4 protons from the mitochondrial matrix. This Bos taurus (Bovine) protein is Cytochrome c oxidase subunit 4 isoform 1, mitochondrial (COX4I1).